A 704-amino-acid polypeptide reads, in one-letter code: Plasma membrane ATPase 2 (704 aa).

A helical transmembrane segment spans residues 1–16 (CSIAVGMIIEIIVMYP). Residues 17 to 26 (IQHRKYRPGI) lie on the Extracellular side of the membrane. A helical membrane pass occupies residues 27-48 (DNLLVLLIGGIPIAMPTVLSVT). The Cytoplasmic segment spans residues 49–395 (MAIGSHRLAQ…TSRAIFQRMK (347 aa)). The 4-aspartylphosphate intermediate role is filled by aspartate 81. 2 residues coordinate Mg(2+): aspartate 340 and aspartate 344. A helical transmembrane segment spans residues 396–417 (NYTIYAVSITIRIVLGFMLLAL). The Extracellular portion of the chain corresponds to 418 to 422 (IWKFD). Residues 423-445 (FPPFMVLIIAILNDGTIMTISKD) traverse the membrane as a helical segment. Over 446–461 (RVKPSPLPDSWKLAEI) the chain is Cytoplasmic. A helical membrane pass occupies residues 462–482 (FTTGVVLGGYLAMMTVIFFWA). Residues 483 to 507 (AYETQFFPRVFGVSTLQRTATDDFR) are Extracellular-facing. The helical transmembrane segment at 508-528 (KLASAIYLQVSTISQALIFVT) threads the bilayer. Over 529–540 (RSRSWSFVERPG) the chain is Cytoplasmic. Residues 541 to 561 (LLLVVALIVAQLVATLIAVYA) form a helical membrane-spanning segment. Residues 562-570 (SWSFAAIEG) lie on the Extracellular side of the membrane. Residues 571–591 (IGWGWAGVIWLYNLVFYFPLD) form a helical membrane-spanning segment. The Cytoplasmic segment spans residues 592–704 (IIKFLIRYAL…IETIQQSYTV (113 aa)).

The protein belongs to the cation transport ATPase (P-type) (TC 3.A.3) family. Type IIIA subfamily. As to quaternary structure, possibly exists as a homodimer or a homotrimer.

It localises to the cell membrane. The catalysed reaction is ATP + H2O + H(+)(in) = ADP + phosphate + 2 H(+)(out). Its function is as follows. The plasma membrane ATPase of plants and fungi is a hydrogen ion pump. The proton gradient it generates drives the active transport of nutrients by H(+)-symport. The resulting external acidification and/or internal alkinization may mediate growth responses. This chain is Plasma membrane ATPase 2 (LHA2), found in Solanum lycopersicum (Tomato).